Here is a 571-residue protein sequence, read N- to C-terminus: Septation ring formation regulator EzrA (571 aa).

Residues 1-3 (MYY) lie on the Extracellular side of the membrane. The helical transmembrane segment at 4–22 (MLIGFIIVVIAVIGAGYIL) threads the bilayer. The Cytoplasmic segment spans residues 23 to 571 (KRKHYQRINE…ASKVSVDDIE (549 aa)). 5 coiled-coil regions span residues 102–147 (ATNA…TKEK), 248–298 (LAQM…DTLE), 326–374 (DALA…ASGE), 400–437 (KFAE…ERER), and 478–529 (RIAE…ENHF).

It belongs to the EzrA family.

The protein localises to the cell membrane. In terms of biological role, negative regulator of FtsZ ring formation; modulates the frequency and position of FtsZ ring formation. Inhibits FtsZ ring formation at polar sites. Interacts either with FtsZ or with one of its binding partners to promote depolymerization. This is Septation ring formation regulator EzrA from Listeria monocytogenes serotype 4a (strain HCC23).